Reading from the N-terminus, the 271-residue chain is GATA transcription factor 19 (271 aa).

The interval Met-1–Ala-23 is disordered. The 36-residue stretch at Leu-33–Gly-68 folds into the Tify domain. Residues Arg-95–Arg-137 form the CCT domain. Residues Cys-166–Cys-193 form a GATA-type zinc finger. The tract at residues Asn-238–Ser-271 is disordered. Residues Gln-252–Ser-271 are compositionally biased toward basic and acidic residues.

The protein belongs to the type IV zinc-finger family. Class C subfamily.

The protein localises to the nucleus. Functionally, transcriptional activator that specifically binds 5'-GATA-3' or 5'-GAT-3' motifs within gene promoters. This chain is GATA transcription factor 19, found in Oryza sativa subsp. indica (Rice).